We begin with the raw amino-acid sequence, 559 residues long: Terpene synthase 1 (559 aa).

4 residues coordinate Mg(2+): Asp-312, Asp-316, Asp-456, and Glu-464. The DDXXD motif motif lies at 312–316 (DDLYD).

It belongs to the terpene synthase family. Tpsa subfamily. The cofactor is Mg(2+). It depends on Mn(2+) as a cofactor. In terms of tissue distribution, mostly expressed in stems and, to a lower extent, in leaves, roots and fruits.

The catalysed reaction is (2E,6E)-farnesyl diphosphate = (-)-(E)-beta-caryophyllene + diphosphate. It carries out the reaction (2E,6E)-farnesyl diphosphate = alpha-humulene + diphosphate. It participates in secondary metabolite biosynthesis; terpenoid biosynthesis. Sesquiterpene synthase involved in the biosynthesis of volatile compounds that contribute to the characteristic flavors of black pepper. Mediates the conversion of (2E,6E)-farnesyl diphosphate (FPP) into beta-caryophyllene and, as a minor compound, into alpha-humulene. The polypeptide is Terpene synthase 1 (Piper nigrum (Black pepper)).